The sequence spans 296 residues: Chondrolectin (296 aa).

A signal peptide spans 1 to 20 (MRATLRILCALTFLVSCSRG). Topologically, residues 21 to 238 (ARVVSGQTVC…RLIIAGPSSM (218 aa)) are extracellular. The 150-residue stretch at 38–187 (CYKIAYFKDV…CNMKHNFICK (150 aa)) folds into the C-type lectin domain. A compositionally biased stretch (basic and acidic residues) spans 197–221 (VQSDRPGGHDVDLSTEDKEDRRTPP). The disordered stretch occupies residues 197–229 (VQSDRPGGHDVDLSTEDKEDRRTPPTDEDESPR). A helical transmembrane segment spans residues 239 to 266 (LLIYVIIPTIPLLLLILVASGTCCFQML). Over 267 to 296 (SKSKPRTKTSVNQSTLWISKTPKIDSGMEV) the chain is Cytoplasmic.

As to expression, expressed in developing motor neurons.

Its subcellular location is the membrane. In terms of biological role, plays a role in the development of the nervous system such as in neurite outgrowth and elongation. Involved in motor axon growth and guidance. Required for correct interactions of motor axons with the horizontal myoseptum. This is Chondrolectin (chodl) from Danio rerio (Zebrafish).